Reading from the N-terminus, the 74-residue chain is Protein SspS (74 aa).

Belongs to the alpha/beta-type SASP family.

This chain is Protein SspS (sspS), found in Streptococcus pyogenes.